A 640-amino-acid polypeptide reads, in one-letter code: Biosynthetic arginine decarboxylase (640 aa).

Lys-109 carries the post-translational modification N6-(pyridoxal phosphate)lysine. A substrate-binding site is contributed by 291-301 (LDVGGGLGVDY).

It belongs to the Orn/Lys/Arg decarboxylase class-II family. SpeA subfamily. Mg(2+) serves as cofactor. Pyridoxal 5'-phosphate is required as a cofactor.

The catalysed reaction is L-arginine + H(+) = agmatine + CO2. The protein operates within amine and polyamine biosynthesis; agmatine biosynthesis; agmatine from L-arginine: step 1/1. Functionally, catalyzes the biosynthesis of agmatine from arginine. The sequence is that of Biosynthetic arginine decarboxylase from Synechococcus sp. (strain RCC307).